The chain runs to 1112 residues: Mediator of RNA polymerase II transcription subunit 14 (1112 aa).

Disordered regions lie at residues 1-76, 120-141, and 1088-1112; these read MPGV…INES, SPHGQMPSTPANGKAPGDQSPE, and TNSAGARSSQQCDAPPEAADVITID. Residues 20 to 39 show a composition bias toward polar residues; that stretch reads SPDNVSSTPFPQERVNQSGD. Positions 64-73 are enriched in basic and acidic residues; sequence IETHTGKDGI. The segment covering 1088 to 1099 has biased composition (polar residues); sequence TNSAGARSSQQC.

Belongs to the Mediator complex subunit 14 family. In terms of assembly, component of the Mediator complex.

Its subcellular location is the nucleus. In terms of biological role, component of the Mediator complex, a coactivator involved in the regulated transcription of nearly all RNA polymerase II-dependent genes. Mediator functions as a bridge to convey information from gene-specific regulatory proteins to the basal RNA polymerase II transcription machinery. Mediator is recruited to promoters by direct interactions with regulatory proteins and serves as a scaffold for the assembly of a functional preinitiation complex with RNA polymerase II and the general transcription factors. The sequence is that of Mediator of RNA polymerase II transcription subunit 14 (rgr1) from Aspergillus clavatus (strain ATCC 1007 / CBS 513.65 / DSM 816 / NCTC 3887 / NRRL 1 / QM 1276 / 107).